The following is an 803-amino-acid chain: Translation initiation factor IF-2 (803 aa).

2 disordered regions span residues 95–125 and 138–209; these read PVVE…EKAE and EVKE…KLEQ. A compositionally biased stretch (polar residues) spans 111-121; sequence VPLTSDTTNLN. Residues 138–155 are compositionally biased toward basic and acidic residues; it reads EVKEEAKKTPSEKKETPK. The span at 156–167 shows a compositional bias: basic residues; sequence KGPRKETRRSRK. Basic and acidic residues predominate over residues 168 to 188; sequence PDKEDKWEREELHMTKLVEER. Residues 302-471 form the tr-type G domain; it reads PRAPVVTIMG…LLQAEVLELK (170 aa). The tract at residues 311 to 318 is G1; that stretch reads GHVDHGKT. 311 to 318 serves as a coordination point for GTP; the sequence is GHVDHGKT. The G2 stretch occupies residues 336–340; the sequence is GITQH. The G3 stretch occupies residues 357–360; sequence DTPG. Residues 357-361 and 411-414 each bind GTP; these read DTPGH and NKID. Positions 411-414 are G4; the sequence is NKID. The G5 stretch occupies residues 447–449; sequence SAK.

Belongs to the TRAFAC class translation factor GTPase superfamily. Classic translation factor GTPase family. IF-2 subfamily.

Its subcellular location is the cytoplasm. In terms of biological role, one of the essential components for the initiation of protein synthesis. Protects formylmethionyl-tRNA from spontaneous hydrolysis and promotes its binding to the 30S ribosomal subunits. Also involved in the hydrolysis of GTP during the formation of the 70S ribosomal complex. This chain is Translation initiation factor IF-2, found in Coxiella burnetii (strain CbuG_Q212) (Coxiella burnetii (strain Q212)).